We begin with the raw amino-acid sequence, 258 residues long: Agamous-like MADS-box protein AGL3 (258 aa).

Positions 3–57 constitute an MADS-box domain; that stretch reads RGKVELKRIENKINRQVTFAKRRNGLLKKAYELSVLCDAEIALLIFSNRGKLYEF. Positions 88 to 178 constitute a K-box domain; sequence LQDKYQDYLK…RRKLEDSDAA (91 aa). The tract at residues 186–214 is disordered; that stretch reads SSAAEQQQQHQQQQQGMSSYQSNPPIQEA. The span at 191–200 shows a compositional bias: low complexity; that stretch reads QQQQHQQQQQ. The segment covering 201 to 210 has biased composition (polar residues); the sequence is GMSSYQSNPP.

Forms homodimers. Interacts with TT16/AGL32. As to expression, expressed in aerial vegetative organs and flowers, but not in roots. Expressed in flower primordia.

Its subcellular location is the nucleus. Probable transcription factor that binds specifically to the CArG box DNA sequence 5'-CC (A/T)6 GG-3'. Plays an important role in the determination of flower meristem identity. Involved in the specification of sepal identity. Contributes to the development of petals, stamens and carpels. The chain is Agamous-like MADS-box protein AGL3 (AGL3) from Arabidopsis thaliana (Mouse-ear cress).